Reading from the N-terminus, the 491-residue chain is Protein nucleotidyltransferase YdiU (491 aa).

ATP-binding residues include glycine 88, glycine 90, arginine 91, lysine 111, aspartate 123, glycine 124, arginine 174, and arginine 181. Catalysis depends on aspartate 250, which acts as the Proton acceptor. Mg(2+) contacts are provided by asparagine 251 and aspartate 260. Aspartate 260 contacts ATP.

The protein belongs to the SELO family. Mg(2+) serves as cofactor. The cofactor is Mn(2+).

The catalysed reaction is L-seryl-[protein] + ATP = 3-O-(5'-adenylyl)-L-seryl-[protein] + diphosphate. The enzyme catalyses L-threonyl-[protein] + ATP = 3-O-(5'-adenylyl)-L-threonyl-[protein] + diphosphate. It catalyses the reaction L-tyrosyl-[protein] + ATP = O-(5'-adenylyl)-L-tyrosyl-[protein] + diphosphate. It carries out the reaction L-histidyl-[protein] + UTP = N(tele)-(5'-uridylyl)-L-histidyl-[protein] + diphosphate. The catalysed reaction is L-seryl-[protein] + UTP = O-(5'-uridylyl)-L-seryl-[protein] + diphosphate. The enzyme catalyses L-tyrosyl-[protein] + UTP = O-(5'-uridylyl)-L-tyrosyl-[protein] + diphosphate. Functionally, nucleotidyltransferase involved in the post-translational modification of proteins. It can catalyze the addition of adenosine monophosphate (AMP) or uridine monophosphate (UMP) to a protein, resulting in modifications known as AMPylation and UMPylation. The sequence is that of Protein nucleotidyltransferase YdiU from Bradyrhizobium sp. (strain BTAi1 / ATCC BAA-1182).